Here is a 65-residue protein sequence, read N- to C-terminus: MFKLKTKSGAKKRFKFIVNGKIKRKKSFKNHLLTKKENKRKRRLSYFSRVHKSDIKNIKKQLLLN.

Belongs to the bacterial ribosomal protein bL35 family.

The sequence is that of Large ribosomal subunit protein bL35 from Karelsulcia muelleri (strain GWSS) (Sulcia muelleri).